The chain runs to 340 residues: Functional amyloid subunit FapC (340 aa).

An N-terminal signal peptide occupies residues 1-24 (MKATMVLTPLALAMAAVLSVSAYA). The stretch at 67 to 100 (NNASVSGSIKDASGNVGVNVAAGDNNQQANAAAL) is one FapC_R1 repeat. Residues 101-133 (ASADASFVFGTATASTSVLQSGYGNTLNNYSNP) form a linker 1 region. Residues 134-167 (NTASLSNSANNVSGNLGVNVAAGNFNQQKNDLAA) form a FapC_R2 repeat. The linker 2 stretch occupies residues 168 to 290 (AVSNGQYSTA…AIVGFKTPVT (123 aa)). A FapC_R3 repeat occupies 291–324 (NNASLSNSLQNVSGNVGVNIAAGGGNQQSNSLSI). The short motif at 328–331 (CSSC) is the Cys-X-X-Cys element.

Belongs to the FapB/FapC family. As to quaternary structure, the major component of purified amyloid fibrils. Fibrils are resistant to boiling in 2% (weight/vol) SDS and require &gt;90% (vol/vol) formic acid to dissolve. Interacts with FapA in vitro.

The protein resides in the fimbrium. It is found in the secreted. The major functional amyloid subunit in this bacterium. Upon overexpression of the endogenous six-gene locus (fapA-fapF), cells form large clumps during liquid growth, make large amounts of biofilm and produce amyloid fibrils. The protein is Functional amyloid subunit FapC of Pseudomonas aeruginosa (strain ATCC 15692 / DSM 22644 / CIP 104116 / JCM 14847 / LMG 12228 / 1C / PRS 101 / PAO1).